The primary structure comprises 149 residues: Urease accessory protein UreE (149 aa).

The protein belongs to the UreE family.

It localises to the cytoplasm. Its function is as follows. Involved in urease metallocenter assembly. Binds nickel. Probably functions as a nickel donor during metallocenter assembly. This is Urease accessory protein UreE from Corynebacterium efficiens (strain DSM 44549 / YS-314 / AJ 12310 / JCM 11189 / NBRC 100395).